The following is a 285-amino-acid chain: Bifunctional protein FolD (285 aa).

Residues 163-165 (GRS), S188, and A231 contribute to the NADP(+) site.

It belongs to the tetrahydrofolate dehydrogenase/cyclohydrolase family. As to quaternary structure, homodimer.

The enzyme catalyses (6R)-5,10-methylene-5,6,7,8-tetrahydrofolate + NADP(+) = (6R)-5,10-methenyltetrahydrofolate + NADPH. It carries out the reaction (6R)-5,10-methenyltetrahydrofolate + H2O = (6R)-10-formyltetrahydrofolate + H(+). Its pathway is one-carbon metabolism; tetrahydrofolate interconversion. In terms of biological role, catalyzes the oxidation of 5,10-methylenetetrahydrofolate to 5,10-methenyltetrahydrofolate and then the hydrolysis of 5,10-methenyltetrahydrofolate to 10-formyltetrahydrofolate. This Oenococcus oeni (strain ATCC BAA-331 / PSU-1) protein is Bifunctional protein FolD.